The sequence spans 194 residues: Probable GTP-binding protein EngB (194 aa).

An EngB-type G domain is found at 22 to 194 (GKPEIALVGR…SVWEWITAHM (173 aa)). GTP is bound by residues 30–37 (GRSNVGKS), 57–61 (GKTQT), 75–78 (DVPG), 142–145 (TKSD), and 175–177 (FSS). The Mg(2+) site is built by serine 37 and threonine 59.

The protein belongs to the TRAFAC class TrmE-Era-EngA-EngB-Septin-like GTPase superfamily. EngB GTPase family. The cofactor is Mg(2+).

Functionally, necessary for normal cell division and for the maintenance of normal septation. This chain is Probable GTP-binding protein EngB, found in Leuconostoc citreum (strain KM20).